The primary structure comprises 800 residues: MGPASKRNKKKRPSFRKLLKTSNLKLENKLKNRQFKQQSSAKKQRKEQRKLHKAISDVSHQTLKPLERYKKRPEDEEEEEEFLESLPTDMMDEDDLEHIRAIAQKASFLTRDLSSCAPVHAKKHKSEQALENYEKMPRKMQQEEEKELIHLLPIKDKSGLIPQSMEKPVLPQAEEEEEEPNQEVYLQKEEEPESAPLLTPQEQFEQRAQKLMEKKLRIAALSSAILADPHVNIKKLKELRAMLMETDPCVAVTVRKLVMVSLMEVFKDIVPAYRIRPLTEEEKAAKVKKETLQLREFEEGLVSQYKFYLEELEQTVKDWKQKKEKRSQAVSLQSYKGLAEVAVRCICELLVALPHFNFHNNIIVMLVPLMNDSDKKVSEMCCEAVKKLLKQDKVGQASLAMVKVISGMVKSRNYRIKPVVLNCLLCLRIKEVDMKKDTEDTAPKKKFMSFKEKRKNLSRMQRKWKKAEEKLQKELLEAEATESKEKKIKLHTETLNVVFLIYFRILKKAQKSVLLSSVLEGLAKFAHLINLEFFDDLLAVLYNLITSGDLTYRESLHCILTSFHILSGQGDVLNIDPLKFYSHLYRTLLTLHAGGVNEDTVIVLQCLDVMLSKRRKQVTLQRAQAFLKRLNTVALHLLPDSCVGILAANRMLMQTFPKCDILLDNETQGSGVYLPELDVPEYCNPQNTALWELHLLKSHYHPVVRKFAAHLMKGAPSEGSGALGVELSRRSPLQLFEDYSVKDMSFNPPVAGPPSKKKEYFTIGHAFLHSELSRQIDAALQEEPEQMSLDFTSPHTQQEP.

2 stretches are compositionally biased toward basic residues: residues 1 to 19 (MGPA…RKLL) and 42 to 53 (KKQRKEQRKLHK). Disordered stretches follow at residues 1 to 91 (MGPA…TDMM) and 167 to 197 (KPVL…SAPL). Positions 65 to 74 (PLERYKKRPE) are enriched in basic and acidic residues. Residues 449-490 (SFKEKRKNLSRMQRKWKKAEEKLQKELLEAEATESKEKKIKL) adopt a coiled-coil conformation. The segment at 780 to 800 (LQEEPEQMSLDFTSPHTQQEP) is disordered. Over residues 789-800 (LDFTSPHTQQEP) the composition is skewed to polar residues.

The protein belongs to the CBF/MAK21 family.

The protein localises to the nucleus. The protein resides in the nucleolus. The sequence is that of Nucleolar complex protein 3 homolog (noc3l) from Danio rerio (Zebrafish).